Consider the following 2561-residue polypeptide: Squalestatin hexaketide synthase (2561 aa).

Residues 1–77 (MDVSKEEGQR…NGTTNITPEF (77 aa)) are disordered. The span at 20 to 74 (NETTNGHTNGYTNGHTNGHTNGTTNATTNGTTNGTMNGTTNGTTNRTTNGTTNIT) shows a compositional bias: low complexity. A Ketosynthase family 3 (KS3) domain is found at 83–503 (QVPVAICGIG…GSNTHIIIDS (421 aa)). Catalysis depends on for beta-ketoacyl synthase activity residues cysteine 253, histidine 390, and histidine 427. A malonyl-CoA:ACP transacylase (MAT) domain region spans residues 603–925 (FIFTGQGAQW…LEAIGKLFCF (323 aa)). The segment at 972–1101 (HELLGERSLE…GLVTASVVIS (130 aa)) is N-terminal hotdog fold. Residues 972-1253 (HELLGERSLE…RGFKCKRTDE (282 aa)) form a dehydratase (DH) domain region. Residues 972 to 1257 (HELLGERSLE…CKRTDESFIQ (286 aa)) form the PKS/mFAS DH domain. The active-site Proton acceptor; for dehydratase activity is the histidine 1004. Residues 1112–1257 (TFPRKVDTSR…CKRTDESFIQ (146 aa)) form a C-terminal hotdog fold region. The Proton donor; for dehydratase activity role is filled by aspartate 1174. A methyltransferase (CMet) domain region spans residues 1421 to 1599 (SFFQAAGLNK…GFEGAGTVVL (179 aa)). Residues 1826 to 2146 (GMLNTLHWVG…RGVHMGRIVV (321 aa)) form an enoyl reductase (ER) (ER) domain region. Residues 2170–2343 (STYLLTGGMG…PASVIDIAAI (174 aa)) are ketoreductase (KR) domain. Positions 2472 to 2550 (VLFAQEIAKR…SLGRLATKRL (79 aa)) constitute a Carrier domain. Serine 2509 is subject to O-(pantetheine 4'-phosphoryl)serine.

It functions in the pathway secondary metabolite biosynthesis. Its function is as follows. Highly reducing polyketide synthase (HR-PKS); part of the gene cluster that mediates the biosynthesis of squalestatin S1 (SQS1, also known as zaragozic acid A), a heavily oxidized fungal polyketide that offers potent cholesterol lowering activity by targeting squalene synthase (SS). SQS1 is composed of a 2,8-dioxobicyclic[3.2.1]octane-3,4,5-tricarboxyclic acid core that is connected to two lipophilic polyketide arms. These initial steps feature the priming of an unusual benzoic acid starter unit onto the highly reducing polyketide synthase pks2, followed by oxaloacetate extension and product release to generate a tricarboxylic acid containing product. The phenylalanine ammonia lyase (PAL) M7 and the acyl-CoA ligase M9 are involved in transforming phenylalanine into benzoyl-CoA. The citrate synthase-like protein R3 is involved in connecting the C-alpha-carbons of the hexaketide chain and oxaloacetate to afford the tricarboxylic acid unit. The potential hydrolytic enzymes, M8 and M10, are in close proximity to pks2 and may participate in product release. On the other side, the tetraketide arm is synthesized by a the squalestatin tetraketide synthase pks1 and enzymatically esterified to the core in the last biosynthetic step, by the acetyltransferase M4. The biosynthesis of the tetraketide must involve 3 rounds of chain extension. After the first and second rounds methyl-transfer occurs, and in all rounds of extension the ketoreductase and dehydratase are active. The enoyl reductase and C-MeT of pks1 are not active in the final round of extension. The acetyltransferase M4 appears to have a broad substrate selectivity for its acyl CoA substrate, allowing the in vitro synthesis of novel squalestatins. The biosynthesis of SQS1 requires several oxidative steps likely performed by oxidoreductases M1, R1 and R2. Finally, in support of the identification of the cluster as being responsible for SQS1 production, the cluster contains a gene encoding a putative squalene synthase (SS) R6, suggesting a likely mechanism for self-resistance. The polypeptide is Squalestatin hexaketide synthase (Phoma sp. (strain ATCC 20986 / MF5453)).